We begin with the raw amino-acid sequence, 957 residues long: Glycine dehydrogenase (decarboxylating) (957 aa).

Lys708 carries the post-translational modification N6-(pyridoxal phosphate)lysine.

The protein belongs to the GcvP family. In terms of assembly, the glycine cleavage system is composed of four proteins: P, T, L and H. Pyridoxal 5'-phosphate serves as cofactor.

The enzyme catalyses N(6)-[(R)-lipoyl]-L-lysyl-[glycine-cleavage complex H protein] + glycine + H(+) = N(6)-[(R)-S(8)-aminomethyldihydrolipoyl]-L-lysyl-[glycine-cleavage complex H protein] + CO2. The glycine cleavage system catalyzes the degradation of glycine. The P protein binds the alpha-amino group of glycine through its pyridoxal phosphate cofactor; CO(2) is released and the remaining methylamine moiety is then transferred to the lipoamide cofactor of the H protein. This is Glycine dehydrogenase (decarboxylating) from Salmonella arizonae (strain ATCC BAA-731 / CDC346-86 / RSK2980).